The chain runs to 261 residues: tRNA pseudouridine synthase A (261 aa).

Residue Asp-51 is the Nucleophile of the active site. Tyr-109 contacts substrate.

It belongs to the tRNA pseudouridine synthase TruA family. As to quaternary structure, homodimer.

It carries out the reaction uridine(38/39/40) in tRNA = pseudouridine(38/39/40) in tRNA. Its function is as follows. Formation of pseudouridine at positions 38, 39 and 40 in the anticodon stem and loop of transfer RNAs. The sequence is that of tRNA pseudouridine synthase A from Haemophilus ducreyi (strain 35000HP / ATCC 700724).